The chain runs to 230 residues: MHANWKTWAHVTKLDPDKRLPRGAVEEIATSGTDALMLSGTLNVTRENLQELLDLVSAYGLPLVVEPASPDCAIFDGGIDHLFVPSVLNTNDVRWIVGKHYAWLRQASGIDWEMVVPEAYIVLNPNSAVGRVTGADCSLSTGDVAAFAQVADRYFRFPIVYIEYSGTYGDPAIVQAASEAVENATLYYGGGIRSAEQAAEMGRYADTIVVGNAVYEEGIDVLRATVRAVQ.

Lys13 is a sn-glycerol 1-phosphate binding site. Mg(2+) is bound by residues Asp15 and Thr41. Sn-glycerol 1-phosphate is bound by residues 161-166 (YIEYSG), Gly191, and 211-212 (GN).

The protein belongs to the GGGP/HepGP synthase family. Group I subfamily. Requires Mg(2+) as cofactor.

It localises to the cytoplasm. It carries out the reaction sn-glycerol 1-phosphate + (2E,6E,10E)-geranylgeranyl diphosphate = sn-3-O-(geranylgeranyl)glycerol 1-phosphate + diphosphate. The protein operates within membrane lipid metabolism; glycerophospholipid metabolism. Functionally, prenyltransferase that catalyzes the transfer of the geranylgeranyl moiety of geranylgeranyl diphosphate (GGPP) to the C3 hydroxyl of sn-glycerol-1-phosphate (G1P). This reaction is the first ether-bond-formation step in the biosynthesis of archaeal membrane lipids. The polypeptide is Geranylgeranylglyceryl phosphate synthase (Methanoculleus marisnigri (strain ATCC 35101 / DSM 1498 / JR1)).